The chain runs to 480 residues: Glycogen synthase 1 (480 aa).

An ADP-alpha-D-glucose-binding site is contributed by Lys15.

The protein belongs to the glycosyltransferase 1 family. Bacterial/plant glycogen synthase subfamily.

The catalysed reaction is [(1-&gt;4)-alpha-D-glucosyl](n) + ADP-alpha-D-glucose = [(1-&gt;4)-alpha-D-glucosyl](n+1) + ADP + H(+). It participates in glycan biosynthesis; glycogen biosynthesis. Functionally, synthesizes alpha-1,4-glucan chains using ADP-glucose. In Rhizobium meliloti (strain 1021) (Ensifer meliloti), this protein is Glycogen synthase 1 (glgA1).